An 841-amino-acid chain; its full sequence is Alpha-glucuronidase A (841 aa).

The first 20 residues, 1–20 (MRGSNLFQLTLALLLSLVAA), serve as a signal peptide directing secretion. 14 N-linked (GlcNAc...) asparagine glycosylation sites follow: Asn-51, Asn-76, Asn-149, Asn-222, Asn-279, Asn-310, Asn-343, Asn-450, Asn-465, Asn-527, Asn-576, Asn-682, Asn-723, and Asn-732.

Belongs to the glycosyl hydrolase 67 family.

It is found in the secreted. It catalyses the reaction an alpha-D-glucuronoside + H2O = D-glucuronate + an alcohol. Its function is as follows. Alpha-glucuronidase involved in the hydrolysis of xylan, a major structural heterogeneous polysaccharide found in plant biomass representing the second most abundant polysaccharide in the biosphere, after cellulose. Releases 4-O-methylglucuronic acid from xylan. The sequence is that of Alpha-glucuronidase A (aguA) from Aspergillus tubingensis.